An 88-amino-acid polypeptide reads, in one-letter code: Small ribosomal subunit protein bS16c (88 aa).

The protein belongs to the bacterial ribosomal protein bS16 family.

The protein localises to the plastid. It localises to the chloroplast. This Solanum bulbocastanum (Wild potato) protein is Small ribosomal subunit protein bS16c.